The sequence spans 131 residues: Interleukin-13 (131 aa).

The N-terminal stretch at 1–18 (MALWVTAVLALACLGGLA) is a signal peptide. N-linked (GlcNAc...) asparagine glycosylation is found at Asn-42, Asn-52, and Asn-75. 2 disulfide bridges follow: Cys-51/Cys-79 and Cys-67/Cys-93.

The protein belongs to the IL-4/IL-13 family. As to quaternary structure, interacts with IL13RA2.

It is found in the secreted. Its function is as follows. Cytokine that plays important roles in allergic inflammation and immune response to parasite infection. Synergizes with IL2 in regulating interferon-gamma synthesis. Stimulates B-cell proliferation, and activation of eosinophils, basophils, and mast cells. Plays an important role in controlling IL33 activity by modulating the production of transmembrane and soluble forms of interleukin-1 receptor-like 1/IL1RL1. Displays the capacity to antagonize Th1-driven proinflammatory immune response and downregulates synthesis of many proinflammatory cytokines including IL1, IL6, IL10, IL12 and TNF-alpha through a mechanism that partially involves suppression of NF-kappa-B. Also functions on nonhematopoietic cells, including endothelial cells where it induces vascular cell adhesion protein 1/VCAM1, which is important in the recruitment of eosinophils. Exerts its biological effects through its receptors which comprises the IL4R chain and the IL13RA1 chain, to activate JAK1 and TYK2, leading to the activation of STAT6. Aside from IL13RA1, another receptor IL13RA2 acts as a high affinity decoy for IL13 and mediates internalization and depletion of extracellular IL13. In Mus musculus (Mouse), this protein is Interleukin-13 (Il13).